The chain runs to 214 residues: Killer cell lectin-like receptor subfamily B member 1 (214 aa).

The Cytoplasmic segment spans residues 1–42; that stretch reads MDAPVLYAELHLANTQGLRCTSPPSPRQDACWGSGWHRVALK. The chain crosses the membrane as a helical; Signal-anchor for type II membrane protein span at residues 43 to 63; that stretch reads LGCVGLILLLMGLSVLVGFLV. Residues 64 to 214 are Extracellular-facing; the sequence is QKPPIEKCSV…WICQKTLKRV (151 aa). Positions 98–208 constitute a C-type lectin domain; sequence HWNKCLFISQ…CSSDNHWICQ (111 aa). 2 disulfides stabilise this stretch: Cys119/Cys207 and Cys186/Cys199.

The protein localises to the membrane. This chain is Killer cell lectin-like receptor subfamily B member 1 (Klrb1), found in Rattus norvegicus (Rat).